A 368-amino-acid chain; its full sequence is Isocitrate dehydrogenase [NAD] regulatory subunit 3, mitochondrial (368 aa).

The N-terminal 26 residues, 1 to 26, are a transit peptide targeting the mitochondrion; it reads MARRSVSIFNRLLANPPSPFTSLSRS.

Belongs to the isocitrate and isopropylmalate dehydrogenases family. Heterooligomer of catalytic and regulatory subunits. Interacts with 14-3-3-like proteins GRF1 GRF3 and GRF8. As to expression, mainly expressed at a low level in pollen.

The protein resides in the mitochondrion. Its function is as follows. Performs an essential role in the oxidative function of the citric acid cycle. This chain is Isocitrate dehydrogenase [NAD] regulatory subunit 3, mitochondrial (IDH3), found in Arabidopsis thaliana (Mouse-ear cress).